A 142-amino-acid polypeptide reads, in one-letter code: Universal stress protein G (142 aa).

Belongs to the universal stress protein A family.

This Shigella flexneri protein is Universal stress protein G (uspG).